The chain runs to 298 residues: Probable alpha-L-glutamate ligase 2 (298 aa).

One can recognise an ATP-grasp domain in the interval 104 to 287 (MQLLSRQGIG…VADAIICFME (184 aa)). Residues K141, 178-179 (EY), D187, and 211-213 (RSN) contribute to the ATP site. The Mg(2+) site is built by D248, E260, and N262. D248, E260, and N262 together coordinate Mn(2+).

It belongs to the RimK family. It depends on Mg(2+) as a cofactor. Requires Mn(2+) as cofactor.

In Shewanella frigidimarina (strain NCIMB 400), this protein is Probable alpha-L-glutamate ligase 2.